The primary structure comprises 1545 residues: Tricalbin-3 (1545 aa).

Residues 1-89 (MTGIKAQVHP…SNPEGKKQSS (89 aa)) form a disordered region. The Cytoplasmic portion of the chain corresponds to 1 to 206 (MTGIKAQVHP…AYILENFYND (206 aa)). The segment covering 62 to 80 (TKTSNSVSDVSKGQKTADS) has biased composition (polar residues). Phosphoserine occurs at positions 67 and 112. Residues 207-227 (WYCNIATVLGTCFFSWLFAYI) form a helical membrane-spanning segment. A topological domain (extracellular) is located at residue Gly228. The helical transmembrane segment at 229-249 (FSWWSMIFIFLGTATVYNAEY) threads the bilayer. The Cytoplasmic segment spans residues 250–1545 (TRFNRNIRDD…VPEVPQEYTQ (1296 aa)). The 208-residue stretch at 272 to 479 (RVESTTWLNS…PPNHLDINVE (208 aa)) folds into the SMP-LTD domain. One can recognise a C2 1 domain in the interval 470–596 (PPNHLDINVE…LQNPVLDNQT (127 aa)). A coiled-coil region spans residues 620-660 (EDKSEEKAVERAEAKAKGKKEDENEDTTEKEEDENEESSQT). The span at 624-641 (EEKAVERAEAKAKGKKED) shows a compositional bias: basic and acidic residues. The interval 624 to 660 (EEKAVERAEAKAKGKKEDENEDTTEKEEDENEESSQT) is disordered. Residues 642 to 658 (ENEDTTEKEEDENEESS) are compositionally biased toward acidic residues. C2 domains follow at residues 646-763 (TTEK…AQEF) and 783-897 (MTGA…SGKY). A coiled-coil region spans residues 937-972 (SPEELVNVEKLEKELKEKKKKFEATQEENEQEMEKN). The C2 4 domain maps to 1119–1234 (PTSVKLPSSE…EVGKTYNWNL (116 aa)). Ca(2+)-binding residues include Asp1150, Asp1156, Asp1204, Asp1206, and Asp1212. Residues 1304–1404 (LLKSLGGNPM…NSRGHSRASS (101 aa)) form a disordered region. Over residues 1318–1328 (SSNGNESNGAK) the composition is skewed to polar residues. A compositionally biased stretch (basic and acidic residues) spans 1329-1340 (KSSEKKSFDRRS). 3 positions are modified to phosphoserine: Ser1340, Ser1342, and Ser1346. A compositionally biased stretch (polar residues) spans 1341–1351 (PSNLNSTSVTP). The residue at position 1350 (Thr1350) is a Phosphothreonine. Ser1354 carries the phosphoserine modification. Positions 1361–1373 (VPNTSYAPVQSAS) are enriched in polar residues. Residues 1377 to 1404 (KPTDNTSSSSNKKDTPSSNSRGHSRASS) are compositionally biased toward low complexity. A C2 5 domain is found at 1396-1514 (SRGHSRASSF…QQDGQISVKL (119 aa)). Position 1400 is a phosphoserine (Ser1400).

The protein belongs to the tricalbin family. Interacts with TCB2 via its C-terminal domain. The cofactor is Ca(2+).

The protein localises to the cell membrane. It is found in the endoplasmic reticulum membrane. May play a role in membrane trafficking. This chain is Tricalbin-3 (TCB3), found in Saccharomyces cerevisiae (strain ATCC 204508 / S288c) (Baker's yeast).